The following is a 176-amino-acid chain: MALWRAYQRALAAHPWKVQVLTAGSLMGLGDIISQQLVERRGLQEHQRGRTLTMVSLGCGFVGPVVGGWYKVLDRFIPGTTKVDALKKMLLDQGGFAPCFLGCFLPLVGALNGLSAQDNWAKLQRDYPDALITNYYLWPAVQLANFYLVPLHYRLAVVQCVAVIWNSYLSWKAHRL.

4 helical membrane-spanning segments follow: residues 18–38 (VQVL…QQLV), 53–73 (TMVS…YKVL), 94–114 (GGFA…LNGL), and 131–151 (LITN…LVPL).

The protein belongs to the peroxisomal membrane protein PXMP2/4 family. Ubiquitous. Expressed in pancreas, kidney, muscle, liver, lung, placenta, brain and heart.

The protein localises to the mitochondrion inner membrane. Non-selective channel that modulates the membrane potential under normal conditions and oxidative stress, and is involved in mitochondrial homeostasis. Involved in mitochondrial deoxynucleoside triphosphates (dNTP) pool homeostasis and mitochondrial DNA (mtDNA) maintenance. May be involved in the regulation of reactive oxygen species metabolism and the control of oxidative phosphorylation. The chain is Mitochondrial inner membrane protein Mpv17 from Homo sapiens (Human).